Here is a 172-residue protein sequence, read N- to C-terminus: Protein-export protein SecB (172 aa).

The disordered stretch occupies residues 153-172 (AQGQGGDSGIVMPDGSQARH).

The protein belongs to the SecB family. In terms of assembly, homotetramer, a dimer of dimers. One homotetramer interacts with 1 SecA dimer.

It is found in the cytoplasm. One of the proteins required for the normal export of preproteins out of the cell cytoplasm. It is a molecular chaperone that binds to a subset of precursor proteins, maintaining them in a translocation-competent state. It also specifically binds to its receptor SecA. This Cupriavidus metallidurans (strain ATCC 43123 / DSM 2839 / NBRC 102507 / CH34) (Ralstonia metallidurans) protein is Protein-export protein SecB.